The following is a 452-amino-acid chain: Pup--protein ligase (452 aa).

Glu9 provides a ligand contact to Mg(2+). Arg53 contributes to the ATP binding site. Tyr55 contributes to the Mg(2+) binding site. Catalysis depends on Asp57, which acts as the Proton acceptor. Glu63 is a binding site for Mg(2+). ATP-binding residues include Thr66 and Trp419.

This sequence belongs to the Pup ligase/Pup deamidase family. Pup-conjugating enzyme subfamily.

It catalyses the reaction ATP + [prokaryotic ubiquitin-like protein]-L-glutamate + [protein]-L-lysine = ADP + phosphate + N(6)-([prokaryotic ubiquitin-like protein]-gamma-L-glutamyl)-[protein]-L-lysine.. Its pathway is protein degradation; proteasomal Pup-dependent pathway. It participates in protein modification; protein pupylation. Its function is as follows. Catalyzes the covalent attachment of the prokaryotic ubiquitin-like protein modifier Pup to the proteasomal substrate proteins, thereby targeting them for proteasomal degradation. This tagging system is termed pupylation. The ligation reaction involves the side-chain carboxylate of the C-terminal glutamate of Pup and the side-chain amino group of a substrate lysine. The polypeptide is Pup--protein ligase (Acidothermus cellulolyticus (strain ATCC 43068 / DSM 8971 / 11B)).